A 172-amino-acid polypeptide reads, in one-letter code: Photosystem I assembly protein Ycf3 (172 aa).

3 TPR repeats span residues 35–70 (AFTY…EIDP), 74–107 (SYIL…NPFL), and 122–155 (GERA…TPGN).

It belongs to the Ycf3 family.

It localises to the plastid. The protein resides in the chloroplast thylakoid membrane. Essential for the assembly of the photosystem I (PSI) complex. May act as a chaperone-like factor to guide the assembly of the PSI subunits. This Dioscorea elephantipes (Elephant's foot yam) protein is Photosystem I assembly protein Ycf3.